A 251-amino-acid chain; its full sequence is YlmG homolog protein 2, chloroplastic (251 aa).

The transit peptide at 1–51 directs the protein to the chloroplast; it reads MEASANEPAMKSLKSNPSGPIPNFFVSLSSAFTQTPLVRSNKPNLLLLPPV. Transmembrane regions (helical) follow at residues 119 to 139 and 183 to 203; these read GFAAVLPGDSVAGLVVANGLI and FIPPLGGLDLSPILAFLVLNA. Residues 232 to 243 show a composition bias toward basic residues; it reads VRRRRLSSHKDH. The disordered stretch occupies residues 232-251; it reads VRRRRLSSHKDHRPSSASMT.

This sequence belongs to the YggT family.

It localises to the plastid. Its subcellular location is the chloroplast thylakoid membrane. Not required for the biogenesis and accumulation of native cytochrome b6 in the thylakoid membrane. Not functionally involved in the pathway for covalent binding of the c-type heme to cytochrome b6. In Arabidopsis thaliana (Mouse-ear cress), this protein is YlmG homolog protein 2, chloroplastic.